Reading from the N-terminus, the 251-residue chain is uncharacterized protein (251 aa).

It localises to the mitochondrion. This is an uncharacterized protein from Arabidopsis thaliana (Mouse-ear cress).